Here is a 379-residue protein sequence, read N- to C-terminus: 1-deoxy-D-xylulose 5-phosphate reductoisomerase (379 aa).

Residues threonine 10, glycine 11, serine 12, isoleucine 13, asparagine 39, and asparagine 121 each coordinate NADPH. Lysine 122 serves as a coordination point for 1-deoxy-D-xylulose 5-phosphate. Glutamate 123 is a binding site for NADPH. Aspartate 147 provides a ligand contact to Mn(2+). 1-deoxy-D-xylulose 5-phosphate is bound by residues serine 148, glutamate 149, serine 173, and histidine 196. Glutamate 149 is a Mn(2+) binding site. Glycine 202 provides a ligand contact to NADPH. Residues serine 209, asparagine 214, lysine 215, and glutamate 218 each contribute to the 1-deoxy-D-xylulose 5-phosphate site. Glutamate 218 is a Mn(2+) binding site.

It belongs to the DXR family. Requires Mg(2+) as cofactor. It depends on Mn(2+) as a cofactor.

It carries out the reaction 2-C-methyl-D-erythritol 4-phosphate + NADP(+) = 1-deoxy-D-xylulose 5-phosphate + NADPH + H(+). It participates in isoprenoid biosynthesis; isopentenyl diphosphate biosynthesis via DXP pathway; isopentenyl diphosphate from 1-deoxy-D-xylulose 5-phosphate: step 1/6. In terms of biological role, catalyzes the NADPH-dependent rearrangement and reduction of 1-deoxy-D-xylulose-5-phosphate (DXP) to 2-C-methyl-D-erythritol 4-phosphate (MEP). The protein is 1-deoxy-D-xylulose 5-phosphate reductoisomerase of Chlamydia caviae (strain ATCC VR-813 / DSM 19441 / 03DC25 / GPIC) (Chlamydophila caviae).